The primary structure comprises 359 residues: Large ribosomal subunit protein bL27m (359 aa).

Residues 1–24 (MSFWKVATLWQMPLRPSILVQVRT) constitute a mitochondrion transit peptide. Residues 29–48 (AAGSRTSMKDSAGRRLGPKK) are disordered. Basic and acidic residues predominate over residues 35-48 (SMKDSAGRRLGPKK).

This sequence belongs to the bacterial ribosomal protein bL27 family.

The protein localises to the mitochondrion. Its function is as follows. Component of the large subunit of mitochondrial ribosome. The protein is Large ribosomal subunit protein bL27m (MRPL2) of Eremothecium gossypii (strain ATCC 10895 / CBS 109.51 / FGSC 9923 / NRRL Y-1056) (Yeast).